The chain runs to 84 residues: Small ribosomal subunit protein bS20 (84 aa).

This sequence belongs to the bacterial ribosomal protein bS20 family.

Functionally, binds directly to 16S ribosomal RNA. This Levilactobacillus brevis (strain ATCC 367 / BCRC 12310 / CIP 105137 / JCM 1170 / LMG 11437 / NCIMB 947 / NCTC 947) (Lactobacillus brevis) protein is Small ribosomal subunit protein bS20.